The sequence spans 334 residues: Malate dehydrogenase, cytoplasmic (334 aa).

S2 carries the N-acetylserine modification. NAD(+) is bound by residues 11 to 17 (GAAGQIA) and D42. R92 and R98 together coordinate substrate. N105 serves as a coordination point for NAD(+). K110 carries the N6-succinyllysine modification. Q112 contributes to the NAD(+) binding site. 2 positions are modified to N6-acetyllysine: K118 and K121. 129-131 (VGN) contacts NAD(+). Substrate contacts are provided by N131 and R162. H187 functions as the Proton acceptor in the catalytic mechanism. K214 carries the post-translational modification N6-succinyllysine. A Phosphoserine modification is found at S217. An Omega-N-methylarginine modification is found at R230. At S241 the chain carries Phosphoserine. K298 is modified (N6-acetyllysine; alternate). The residue at position 298 (K298) is an N6-succinyllysine; alternate. S309 is modified (phosphoserine). An N6-succinyllysine modification is found at K318. S332 and S333 each carry phosphoserine.

The protein belongs to the LDH/MDH superfamily. MDH type 2 family. In terms of assembly, homodimer. Post-translationally, ISGylated. Acetylation at Lys-118 dramatically enhances enzymatic activity and promotes adipogenic differentiation.

The protein resides in the cytoplasm. It is found in the cytosol. It catalyses the reaction (S)-malate + NAD(+) = oxaloacetate + NADH + H(+). The catalysed reaction is (2R)-2-hydroxy-3-(4-hydroxyphenyl)propanoate + NAD(+) = 3-(4-hydroxyphenyl)pyruvate + NADH + H(+). It carries out the reaction (S)-2-hydroxyglutarate + NAD(+) = 2-oxoglutarate + NADH + H(+). Functionally, catalyzes the reduction of aromatic alpha-keto acids in the presence of NADH. Plays essential roles in the malate-aspartate shuttle and the tricarboxylic acid cycle, important in mitochondrial NADH supply for oxidative phosphorylation. Catalyzes the reduction of 2-oxoglutarate to 2-hydroxyglutarate, leading to elevated reactive oxygen species (ROS). The sequence is that of Malate dehydrogenase, cytoplasmic from Homo sapiens (Human).